Reading from the N-terminus, the 322-residue chain is uncharacterized protein (322 aa).

Disordered regions lie at residues 1–51 and 107–130; these read MARS…GAWA and QERQ…DRPD. A compositionally biased stretch (basic and acidic residues) spans 119-130; it reads LHLEPGNEDRPD.

As to expression, expressed in skin and fetal lung.

This is an uncharacterized protein from Homo sapiens (Human).